A 676-amino-acid chain; its full sequence is RNA helicase NPH-II (676 aa).

A Helicase ATP-binding domain is found at 172–347; it reads FSAWISHRPV…VFLPNPAFIH (176 aa). ATP is bound at residue 185–192; that stretch reads GGTGVGKT. A DEXH box motif is present at residues 296 to 299; that stretch reads DEVH. The Helicase C-terminal domain maps to 366-535; the sequence is NPSSRMAYIE…NYILYANKFN (170 aa).

Belongs to the DEAD box helicase family. DEAH subfamily. In terms of assembly, monomer.

It is found in the virion. The catalysed reaction is ATP + H2O = ADP + phosphate + H(+). NTP-dependent helicase that catalyzes unidirectional unwinding of 3'tailed duplex RNAs and plays an important role during transcription of early mRNAs, presumably by preventing R-loop formation behind the elongating RNA polymerase. Might also play a role in the export of newly synthesized mRNA chains out of the core into the cytoplasm. Required for replication and propagation of viral particles. The chain is RNA helicase NPH-II (OPG084) from Vaccinia virus (strain Copenhagen) (VACV).